The following is a 198-amino-acid chain: Recombination protein RecR (198 aa).

A C4-type zinc finger spans residues 58 to 73 (CSVCGNFTDKDPCAIC). Residues 81–175 (NTICVVEHPK…KVTRIAHGIP (95 aa)) enclose the Toprim domain.

The protein belongs to the RecR family.

Functionally, may play a role in DNA repair. It seems to be involved in an RecBC-independent recombinational process of DNA repair. It may act with RecF and RecO. The protein is Recombination protein RecR of Clostridium tetani (strain Massachusetts / E88).